Reading from the N-terminus, the 474-residue chain is Glycogen synthase (474 aa).

Lysine 12 contacts ADP-alpha-D-glucose.

The protein belongs to the glycosyltransferase 1 family. Bacterial/plant glycogen synthase subfamily.

The enzyme catalyses [(1-&gt;4)-alpha-D-glucosyl](n) + ADP-alpha-D-glucose = [(1-&gt;4)-alpha-D-glucosyl](n+1) + ADP + H(+). It functions in the pathway glycan biosynthesis; glycogen biosynthesis. Functionally, synthesizes alpha-1,4-glucan chains using ADP-glucose. This Xanthomonas campestris pv. campestris (strain 8004) protein is Glycogen synthase.